A 101-amino-acid polypeptide reads, in one-letter code: Large ribosomal subunit protein uL23 (101 aa).

Belongs to the universal ribosomal protein uL23 family. Part of the 50S ribosomal subunit. Contacts protein L29, and trigger factor when it is bound to the ribosome.

Its function is as follows. One of the early assembly proteins it binds 23S rRNA. One of the proteins that surrounds the polypeptide exit tunnel on the outside of the ribosome. Forms the main docking site for trigger factor binding to the ribosome. This chain is Large ribosomal subunit protein uL23, found in Corynebacterium efficiens (strain DSM 44549 / YS-314 / AJ 12310 / JCM 11189 / NBRC 100395).